A 214-amino-acid polypeptide reads, in one-letter code: Cytochrome c biogenesis ATP-binding export protein CcmA (214 aa).

Residues L16–A212 form the ABC transporter domain. Position 48-55 (G48–T55) interacts with ATP.

Belongs to the ABC transporter superfamily. CcmA exporter (TC 3.A.1.107) family. The complex is composed of two ATP-binding proteins (CcmA) and two transmembrane proteins (CcmB).

The protein localises to the cell inner membrane. The enzyme catalyses heme b(in) + ATP + H2O = heme b(out) + ADP + phosphate + H(+). Part of the ABC transporter complex CcmAB involved in the biogenesis of c-type cytochromes; once thought to export heme, this seems not to be the case, but its exact role is uncertain. Responsible for energy coupling to the transport system. The chain is Cytochrome c biogenesis ATP-binding export protein CcmA from Maricaulis maris (strain MCS10) (Caulobacter maris).